The primary structure comprises 177 residues: Putative pre-16S rRNA nuclease (177 aa).

The tract at residues 1–20 (MVATQQGPDRPGIDDPGRGR) is disordered.

It belongs to the YqgF nuclease family.

It is found in the cytoplasm. In terms of biological role, could be a nuclease involved in processing of the 5'-end of pre-16S rRNA. The polypeptide is Putative pre-16S rRNA nuclease (Rhodococcus erythropolis (strain PR4 / NBRC 100887)).